The primary structure comprises 202 residues: Na(+)-translocating NADH-quinone reductase subunit E (202 aa).

6 helical membrane-spanning segments follow: residues 11–31, 35–55, 79–99, 114–134, 144–164, and 180–200; these read SVFIENMALSFFLGMCTFLAV, VTTAMGLGVAVIVVLAISVPA, LSFLKFITFIGVIAALVQILE, GIFLPLITVNCAIFGAVAFMV, LVFGVGSGIGWALAIVLLAAV, and LGITFISAGLMALGFMSFSGV.

The protein belongs to the NqrDE/RnfAE family. As to quaternary structure, composed of six subunits; NqrA, NqrB, NqrC, NqrD, NqrE and NqrF.

It localises to the cell inner membrane. The enzyme catalyses a ubiquinone + n Na(+)(in) + NADH + H(+) = a ubiquinol + n Na(+)(out) + NAD(+). NQR complex catalyzes the reduction of ubiquinone-1 to ubiquinol by two successive reactions, coupled with the transport of Na(+) ions from the cytoplasm to the periplasm. NqrA to NqrE are probably involved in the second step, the conversion of ubisemiquinone to ubiquinol. This is Na(+)-translocating NADH-quinone reductase subunit E from Shewanella denitrificans (strain OS217 / ATCC BAA-1090 / DSM 15013).